The following is a 445-amino-acid chain: Glutamate--tRNA ligase 1 (445 aa).

The 'HIGH' region signature appears at 10-20; the sequence is PSPTGMLHVGN. The short motif at 240 to 244 is the 'KMSKS' region element; it reads KISKR. Lys243 is an ATP binding site.

It belongs to the class-I aminoacyl-tRNA synthetase family. Glutamate--tRNA ligase type 1 subfamily. As to quaternary structure, monomer.

The protein resides in the cytoplasm. It catalyses the reaction tRNA(Glu) + L-glutamate + ATP = L-glutamyl-tRNA(Glu) + AMP + diphosphate. Catalyzes the attachment of glutamate to tRNA(Glu) in a two-step reaction: glutamate is first activated by ATP to form Glu-AMP and then transferred to the acceptor end of tRNA(Glu). In Rickettsia bellii (strain OSU 85-389), this protein is Glutamate--tRNA ligase 1.